Consider the following 693-residue polypeptide: Glycine--tRNA ligase beta subunit (693 aa).

The protein belongs to the class-II aminoacyl-tRNA synthetase family. As to quaternary structure, tetramer of two alpha and two beta subunits.

Its subcellular location is the cytoplasm. The enzyme catalyses tRNA(Gly) + glycine + ATP = glycyl-tRNA(Gly) + AMP + diphosphate. This is Glycine--tRNA ligase beta subunit from Vibrio vulnificus (strain CMCP6).